We begin with the raw amino-acid sequence, 101 residues long: Small ribosomal subunit protein uS14 (101 aa).

The interval 36-61 (ASAEDRRAARQKLQSLPRNSSPVRQR) is disordered. A compositionally biased stretch (polar residues) spans 47 to 59 (KLQSLPRNSSPVR).

Belongs to the universal ribosomal protein uS14 family. Part of the 30S ribosomal subunit. Contacts proteins S3 and S10.

In terms of biological role, binds 16S rRNA, required for the assembly of 30S particles and may also be responsible for determining the conformation of the 16S rRNA at the A site. The sequence is that of Small ribosomal subunit protein uS14 from Methylobacillus flagellatus (strain ATCC 51484 / DSM 6875 / VKM B-1610 / KT).